The following is a 1091-amino-acid chain: E3 ubiquitin-protein ligase TRIM33 (1091 aa).

The span at 1–13 (MADNKGGGGGGGE) shows a compositional bias: gly residues. The interval 1–87 (MADNKGGGGG…SATPASSSSS (87 aa)) is disordered. Positions 52 to 87 (APVAAVPTDTPAEENPAPSSSSVASSSATPASSSSS) are enriched in low complexity. The RING-type 1 zinc-finger motif lies at 97–154 (CAVCKLSLQSRDTEPKLLPCLHSFCRRCLPEPERQLSVPGGTNGDIQQVGVIRCLVCR). Residues 180 to 227 (KSEQVCTSCEDNASAVGFCVECGEWLCKTCIEAHQRVKFTKDHIITNK) form a B box-type 1; atypical zinc finger. Zn(2+) is bound by residues Cys-185, Cys-188, Cys-209, His-213, Cys-245, His-248, Cys-268, and His-273. A B box-type 2 zinc finger spans residues 240–281 (QRPVFCPVHKQEQLKLFCETCDRLTCRDCQLLEHKEHRYQFL). A coiled-coil region spans residues 269–361 (QLLEHKEHRY…QLESVTKERQ (93 aa)). Disordered stretches follow at residues 672 to 779 (LPQP…TPPL) and 821 to 844 (GKSAVRNSMHRPPRGGGGGDGSNK). A compositionally biased stretch (low complexity) spans 675–721 (PTSNMNPSPAPSAMSPGSTGLSNSHTPVRPPSTSSTGSRGSCGSSSR). Positions 754–763 (KQEKAEDGRR) are enriched in basic and acidic residues. The segment covering 768-779 (LSSPESSLTPPL) has biased composition (low complexity). The PHD-type zinc-finger motif lies at 850-897 (EDWCAVCQNGGDLLCCEKCPKVFHLTCHVPTLLSFPSGEWICTFCRDL). A Bromo domain is found at 920-1043 (GLSPVDQMKC…LYFEEKLPAI (124 aa)). The interval 1051-1091 (PLPEFEAEDDDGDVTDDSDDDDFVQPRRKRLKSEERPVHIK) is disordered. Over residues 1055 to 1073 (FEAEDDDGDVTDDSDDDDF) the composition is skewed to acidic residues. Positions 1082–1091 (KSEERPVHIK) are enriched in basic and acidic residues.

May interact with smad4.

It is found in the nucleus. The enzyme catalyses S-ubiquitinyl-[E2 ubiquitin-conjugating enzyme]-L-cysteine + [acceptor protein]-L-lysine = [E2 ubiquitin-conjugating enzyme]-L-cysteine + N(6)-ubiquitinyl-[acceptor protein]-L-lysine.. The protein operates within protein modification; protein ubiquitination. Acts as an E3 ubiquitin-protein ligase for smad4. Promotes ectoderm embryonic development at the expense of other germ layers. Inhibits mesodermal differentiation. Promotes neural development of the ectoderm. Promotes smad4 alpha degradation via the ubiquitin proteasome pathway. May act as a transcriptional repressor. This is E3 ubiquitin-protein ligase TRIM33 (trim33) from Xenopus laevis (African clawed frog).